Consider the following 121-residue polypeptide: Large ribosomal subunit protein uL14 (121 aa).

The protein belongs to the universal ribosomal protein uL14 family. In terms of assembly, part of the 50S ribosomal subunit. Forms a cluster with proteins L3 and L19. In the 70S ribosome, L14 and L19 interact and together make contacts with the 16S rRNA in bridges B5 and B8.

Functionally, binds to 23S rRNA. Forms part of two intersubunit bridges in the 70S ribosome. This Pseudoalteromonas atlantica (strain T6c / ATCC BAA-1087) protein is Large ribosomal subunit protein uL14.